A 456-amino-acid polypeptide reads, in one-letter code: Argininosuccinate lyase (456 aa).

It belongs to the lyase 1 family. Argininosuccinate lyase subfamily.

It is found in the cytoplasm. The catalysed reaction is 2-(N(omega)-L-arginino)succinate = fumarate + L-arginine. It participates in amino-acid biosynthesis; L-arginine biosynthesis; L-arginine from L-ornithine and carbamoyl phosphate: step 3/3. The polypeptide is Argininosuccinate lyase (Shewanella pealeana (strain ATCC 700345 / ANG-SQ1)).